We begin with the raw amino-acid sequence, 302 residues long: MTTPQFGSQRSDDDNWDIVSSVGYTALLVAGWRALHAVSPRPLVRDDYAKTFIAASGDPYLTGVLANPGTSEDELAFPRLYGAQTRFFDDFFDAAGAAGIRQAVIIAAGLDSRAYRLEWPPATTVFEVDLAKVLEFKARVLGEQGAVPKARRVEVAADLRADWSRPLEAAGFDVESPSAWSVEGLLPYLTDEAQHALFTRISGLSAPGSRIAIGALGSRLDHDQLHALEESHPGVDVSGNVDFSALTYEPQSDPAEWLAAHGWVVDPVRNTLDLQAGYGMTPPEVDVKIDGFMRSQYITAAR.

Residues D129 and D158–L159 contribute to the S-adenosyl-L-methionine site.

The protein belongs to the UPF0677 family.

Functionally, exhibits S-adenosyl-L-methionine-dependent methyltransferase activity. The protein is Putative S-adenosyl-L-methionine-dependent methyltransferase MAP_1622c of Mycolicibacterium paratuberculosis (strain ATCC BAA-968 / K-10) (Mycobacterium paratuberculosis).